We begin with the raw amino-acid sequence, 527 residues long: Bifunctional dihydrofolate reductase-thymidylate synthase (527 aa).

Positions 28-238 constitute a DHFR domain; the sequence is PFSVVVASDE…KKYQFEKLVP (211 aa). Val-32 provides a ligand contact to substrate. NADP(+) contacts are provided by residues Ala-34 and 40–46; that span reads GIGDGGT. A substrate-binding site is contributed by Asp-54. NADP(+) contacts are provided by residues 84–86 and 105–108; these read RKT and LSRS. Substrate contacts are provided by Ile-160, Tyr-166, and Thr-184. 161 to 168 contributes to the NADP(+) binding site; it reads GGGTIYKQ. Residues 243–527 form a thymidylate synthase region; sequence EEQYLNLVGR…YPVISMEMAV (285 aa). Arg-263 lines the dUMP pocket. The active site involves Cys-409. DUMP is bound by residues His-410, 428–432, Asn-440, and 470–472; these read QRSCD and HVY.

In the N-terminal section; belongs to the dihydrofolate reductase family. The protein in the C-terminal section; belongs to the thymidylate synthase family. As to quaternary structure, homodimer.

The catalysed reaction is dUMP + (6R)-5,10-methylene-5,6,7,8-tetrahydrofolate = 7,8-dihydrofolate + dTMP. It catalyses the reaction (6S)-5,6,7,8-tetrahydrofolate + NADP(+) = 7,8-dihydrofolate + NADPH + H(+). It functions in the pathway pyrimidine metabolism; dTTP biosynthesis. Its pathway is cofactor biosynthesis; tetrahydrofolate biosynthesis; 5,6,7,8-tetrahydrofolate from 7,8-dihydrofolate: step 1/1. In terms of biological role, bifunctional enzyme. Involved in de novo dTMP biosynthesis. Key enzyme in folate metabolism. Catalyzes an essential reaction for de novo glycine and purine synthesis, DNA precursor synthesis, and for the conversion of dUMP to dTMP. The protein is Bifunctional dihydrofolate reductase-thymidylate synthase of Trypanosoma brucei brucei.